A 465-amino-acid polypeptide reads, in one-letter code: Probable inactive receptor-like kinase BSK12 (465 aa).

The span at 1–12 (MGCCYSLSSTVD) shows a compositional bias: polar residues. Residues 1 to 34 (MGCCYSLSSTVDPVQDHTTDASSEPRNGGGEDPP) form a disordered region. Residue glycine 2 is the site of N-myristoyl glycine attachment. 2 S-palmitoyl cysteine lipidation sites follow: cysteine 3 and cysteine 4. The Protein kinase domain maps to 50 to 291 (FSPENIVSDQ…KEIVATLETL (242 aa)). ATP-binding positions include 56–64 (VSDQTSDVV) and lysine 78.

It belongs to the protein kinase superfamily. Ser/Thr protein kinase family. In terms of assembly, interacts with YDA. Post-translationally, diacylation-mediated membrane association is essential for BSK12 function. Expressed at the mRNA level in the sperm cells in mature pollen, but the protein is only detectable in the zygote and the micropylar endosperm upon fertilization.

It localises to the cell membrane. Its function is as follows. Probable inactive protein kinase that activates the YODA MAP kinase cascade, which regulates the asymmetric first division and embryo polarity, by promoting the elongation of the zygote and the development of its basal daughter cell into the extra-embryonic suspensor. Acts as an adapter at the plasma membrane, possibly by recruiting and binding an activator. This chain is Probable inactive receptor-like kinase BSK12, found in Arabidopsis thaliana (Mouse-ear cress).